The sequence spans 571 residues: Streptolysin O (571 aa).

The N-terminal stretch at 1–33 (MSNKKTFKKYSRVAGLLTAALIIGNLVTANAES) is a signal peptide. The interval 30–108 (NAESNKQNTA…KKSEEDHTEE (79 aa)) is disordered. The span at 37-48 (NTASTETTTTNE) shows a compositional bias: low complexity. Basic and acidic residues-rich tracts occupy residues 50 to 68 (PKPESSELTTEKAGQKTDD) and 79 to 108 (APKEMPLESAEKEEKKSEDKKKSEEDHTEE). The next 4 membrane-spanning stretches (beta stranded) occupy residues 260–273 (KSQIEAALNVNSKI), 280–289 (IDFKSISKGE), 358–367 (SNDVEAAFSA), and 375–387 (KTNGKYSDILENS). The short motif at 529-539 (ECTGLAWEWWR) is the Conserved undecapeptide element. A Cholesterol binding motif is present at residues 561 to 562 (TL).

Belongs to the cholesterol-dependent cytolysin family. As to quaternary structure, homooligomeric pore complex of 35 to 50 subunits; when inserted in the host membrane.

It is found in the secreted. The protein localises to the host cell membrane. Its function is as follows. A cholesterol-dependent toxin that causes cytolysis by forming pores in cholesterol containing host membranes. After binding to target membranes, the protein undergoes a major conformation change, leading to its insertion in the host membrane and formation of an oligomeric pore complex. Cholesterol is required for binding to host membranes, membrane insertion and pore formation; cholesterol binding is mediated by a Thr-Leu pair in the C-terminus. Can be reversibly inactivated by oxidation. This chain is Streptolysin O (slo), found in Streptococcus pyogenes serotype M3 (strain ATCC BAA-595 / MGAS315).